A 381-amino-acid chain; its full sequence is Ecotin-like protein 3 (381 aa).

Residues 232–381 are disordered; the sequence is EHLEVCPKNN…GSKADPVDGK (150 aa). A compositionally biased stretch (polar residues) spans 273–292; it reads NESSPSRPRLSSTAYWPQEN. A compositionally biased stretch (basic and acidic residues) spans 336-347; the sequence is RKAEDDVYEKTM. Residues 363-372 show a composition bias toward polar residues; sequence SASSTKSGNG.

Belongs to the protease inhibitor I11 (ecotin) family.

The polypeptide is Ecotin-like protein 3 (Leishmania major).